A 288-amino-acid chain; its full sequence is CBY1-interacting BAR domain-containing protein 1 (288 aa).

Residues 1 to 47 (MLRRSLENRDAQTRQLQDAVTNVEKHFGELCQIFAAYVRKTARLRDK) constitute a mitochondrion transit peptide. Residues 10–220 (DAQTRQLQDA…KIDEEEDLEV (211 aa)) are BAR-like. Residues 107 to 176 (KMKRDDLKAT…ETIDNFEKQK (70 aa)) adopt a coiled-coil conformation. A disordered region spans residues 266-288 (RKDHQTEDDDEEDEDLDVTEEEN). Residues 271-288 (TEDDDEEDEDLDVTEEEN) are compositionally biased toward acidic residues.

Belongs to the CIBAR family. In terms of assembly, homodimer (via BAR-like domain). Heterodimer with FAM92B (via BAR-like domains). Interacts (via BAR-like domain) with CBY1; this interaction is required for targeting FAM92A to centriole and cilium basal body. Interacts (via BAR-like domain) with CBY3; both proteins form a ninefold symmetric structure at the flagellar base; are recruited to the annulus in a mutually dependent manner and regulate annulus positionning.

The protein localises to the cytoplasm. It localises to the cytoskeleton. The protein resides in the microtubule organizing center. Its subcellular location is the centrosome. It is found in the centriole. The protein localises to the cilium basal body. It localises to the cell projection. The protein resides in the cilium. Its subcellular location is the nucleus. It is found in the mitochondrion inner membrane. The protein localises to the flagellum. Functionally, plays a critical role in regulating mitochondrial ultrastructure and function by maintaining the integrity of mitochondrial morphology, particularly the organization of cristae. Preferentially binds to negatively charged phospholipids like cardiolipin and phosphatidylinositol 4,5-bisphosphate enhancing its interaction with mitochondrial membranes. Induces membrane curvature and tubulation, which are critical for maintaining mitochondrial ultrastructure and the organization of cristae. Plays a crucial role in ciliogenesis. May play a role in limb development through its role in ciliogenesis. Plays a key role in the correct positioning of the annulus, a septin-based ring structure in the sperm flagellum, serving both as a physical barrier and a membrane diffusion barrier that separates the midpiece (MP) from the principal piece (PP). This positioning is essential for proper sperm motility and function. Interacts with CBY3 to form a complex which localizes to the curved membrane region of the flagellar pocket. By doing so, may provide stability and rigidity to the periannular membrane to prevent membrane deformation. This function is crucial for halting annulus migration at the proximal end of the fibrous sheath-containing PP. This is CBY1-interacting BAR domain-containing protein 1 from Bos taurus (Bovine).